A 340-amino-acid polypeptide reads, in one-letter code: 4-amino-5-hydroxymethyl-2-methylpyrimidine phosphate synthase THI12 (340 aa).

Residue Lys-62 is modified to N6-(pyridoxal phosphate)lysine. The active site involves His-66. Residue 115-118 (GEFG) participates in pyridoxal 5'-phosphate binding. A CCCFC; essential for catalytic activity, may be the site of iron coordination motif is present at residues 195-199 (CCCFC).

It belongs to the NMT1/THI5 family. As to quaternary structure, homodimer. Fe cation serves as cofactor.

It carries out the reaction N(6)-(pyridoxal phosphate)-L-lysyl-[4-amino-5-hydroxymethyl-2-methylpyrimidine phosphate synthase] + L-histidyl-[4-amino-5-hydroxymethyl-2-methylpyrimidine phosphate synthase] + 2 Fe(3+) + 4 H2O = L-lysyl-[4-amino-5-hydroxymethyl-2-methylpyrimidine phosphate synthase] + (2S)-2-amino-5-hydroxy-4-oxopentanoyl-[4-amino-5-hydroxymethyl-2-methylpyrimidine phosphate synthase] + 4-amino-2-methyl-5-(phosphooxymethyl)pyrimidine + 3-oxopropanoate + 2 Fe(2+) + 2 H(+). Its pathway is cofactor biosynthesis; thiamine diphosphate biosynthesis. In terms of biological role, responsible for the formation of the pyrimidine heterocycle in the thiamine biosynthesis pathway. Catalyzes the formation of hydroxymethylpyrimidine phosphate (HMP-P) from histidine and pyridoxal phosphate (PLP). The protein uses PLP and the active site histidine to form HMP-P, generating an inactive enzyme. The enzyme can only undergo a single turnover, which suggests it is a suicide enzyme. This is 4-amino-5-hydroxymethyl-2-methylpyrimidine phosphate synthase THI12 from Saccharomyces cerevisiae (strain ATCC 204508 / S288c) (Baker's yeast).